The chain runs to 249 residues: tRNA pseudouridine synthase A (249 aa).

Asp-53 functions as the Nucleophile in the catalytic mechanism. Tyr-111 contacts substrate.

It belongs to the tRNA pseudouridine synthase TruA family. As to quaternary structure, homodimer.

The catalysed reaction is uridine(38/39/40) in tRNA = pseudouridine(38/39/40) in tRNA. Formation of pseudouridine at positions 38, 39 and 40 in the anticodon stem and loop of transfer RNAs. This Streptococcus pneumoniae serotype 19F (strain G54) protein is tRNA pseudouridine synthase A.